The sequence spans 353 residues: Guanine nucleotide-binding protein subunit alpha (353 aa).

Gly-2 carries the N-myristoyl glycine lipid modification. Cys-3 carries S-palmitoyl cysteine lipidation. In terms of domain architecture, G-alpha spans 32–353 (NEIKMLLLGA…QENLRLCGLI (322 aa)). A G1 motif region spans residues 35-48 (KMLLLGAGESGKST). The GTP site is built by Glu-43, Ser-44, Gly-45, Lys-46, Ser-47, Thr-48, Asp-150, Leu-175, Thr-181, Gly-203, Asn-269, Lys-270, Asp-272, and Ala-325. Residue Ser-47 coordinates Mg(2+). Positions 173-181 (DVLRSRVKT) are G2 motif. Thr-181 contacts Mg(2+). The segment at 196–205 (YRMFDVGGQR) is G3 motif. The G4 motif stretch occupies residues 265–272 (ILFLNKID). Residues 323–328 (TCATDT) form a G5 motif region.

It belongs to the G-alpha family. G(q) subfamily. In terms of assembly, g proteins are composed of 3 units; alpha, beta and gamma. The alpha chain contains the guanine nucleotide binding site. It depends on Mg(2+) as a cofactor.

Functionally, guanine nucleotide-binding proteins (G proteins) are involved as modulators or transducers in various transmembrane signaling systems. Involved in the mating pathway. The polypeptide is Guanine nucleotide-binding protein subunit alpha (CGA1) (Cochliobolus heterostrophus (strain C4 / ATCC 48331 / race T) (Southern corn leaf blight fungus)).